A 364-amino-acid polypeptide reads, in one-letter code: Phosphate acyltransferase (364 aa).

Residues 343 to 364 (IRTSGRSGGKSKSSAAREDGAA) form a disordered region.

The protein belongs to the PlsX family. In terms of assembly, homodimer. Probably interacts with PlsY.

The protein localises to the cytoplasm. The catalysed reaction is a fatty acyl-[ACP] + phosphate = an acyl phosphate + holo-[ACP]. The protein operates within lipid metabolism; phospholipid metabolism. Its function is as follows. Catalyzes the reversible formation of acyl-phosphate (acyl-PO(4)) from acyl-[acyl-carrier-protein] (acyl-ACP). This enzyme utilizes acyl-ACP as fatty acyl donor, but not acyl-CoA. The polypeptide is Phosphate acyltransferase (Novosphingobium aromaticivorans (strain ATCC 700278 / DSM 12444 / CCUG 56034 / CIP 105152 / NBRC 16084 / F199)).